We begin with the raw amino-acid sequence, 294 residues long: Protein farnesyltransferase/geranylgeranyltransferase type-1 subunit alpha (294 aa).

PFTA repeat units lie at residues 57 to 91 (YSLR…HTPS), 92 to 125 (YIDN…SLTK), 126 to 160 (NYER…NFND), 161 to 194 (YSQE…ETSK), and 199 to 233 (SLEE…KSGP).

Belongs to the protein prenyltransferase subunit alpha family. As to quaternary structure, heterodimer of an alpha(cwp1) and a beta(cpp1 or cwg2) subunit. It depends on Mg(2+) as a cofactor.

The catalysed reaction is L-cysteinyl-[protein] + (2E,6E)-farnesyl diphosphate = S-(2E,6E)-farnesyl-L-cysteinyl-[protein] + diphosphate. The enzyme catalyses geranylgeranyl diphosphate + L-cysteinyl-[protein] = S-geranylgeranyl-L-cysteinyl-[protein] + diphosphate. Its function is as follows. Catalyzes the transfer of a farnesyl or geranyl-geranyl moiety from farnesyl or geranyl-geranyl diphosphate to a cysteine at the fourth position from the C-terminus of several proteins having the C-terminal sequence Cys-aliphatic-aliphatic-X. The alpha(cwp1) subunit is thought to participate in a stable complex with the substrate. The beta(cpp1 or cwg2) subunits bind the peptide substrate. This chain is Protein farnesyltransferase/geranylgeranyltransferase type-1 subunit alpha (cwp1), found in Schizosaccharomyces pombe (strain 972 / ATCC 24843) (Fission yeast).